A 228-amino-acid chain; its full sequence is Cytidylate kinase (228 aa).

12–20 (GPSGSGKGT) lines the ATP pocket.

It belongs to the cytidylate kinase family. Type 1 subfamily.

Its subcellular location is the cytoplasm. The catalysed reaction is CMP + ATP = CDP + ADP. It carries out the reaction dCMP + ATP = dCDP + ADP. The sequence is that of Cytidylate kinase from Pseudomonas putida (strain W619).